The sequence spans 189 residues: Peptidyl-tRNA hydrolase (189 aa).

Tyrosine 15 is a tRNA binding site. Residue histidine 20 is the Proton acceptor of the active site. TRNA-binding residues include tyrosine 65, asparagine 67, and asparagine 113.

The protein belongs to the PTH family. Monomer.

It localises to the cytoplasm. The enzyme catalyses an N-acyl-L-alpha-aminoacyl-tRNA + H2O = an N-acyl-L-amino acid + a tRNA + H(+). Functionally, hydrolyzes ribosome-free peptidyl-tRNAs (with 1 or more amino acids incorporated), which drop off the ribosome during protein synthesis, or as a result of ribosome stalling. In terms of biological role, catalyzes the release of premature peptidyl moieties from peptidyl-tRNA molecules trapped in stalled 50S ribosomal subunits, and thus maintains levels of free tRNAs and 50S ribosomes. The sequence is that of Peptidyl-tRNA hydrolase from Caldicellulosiruptor saccharolyticus (strain ATCC 43494 / DSM 8903 / Tp8T 6331).